The chain runs to 143 residues: Large ribosomal subunit protein uL11 (143 aa).

It belongs to the universal ribosomal protein uL11 family. Part of the ribosomal stalk of the 50S ribosomal subunit. Interacts with L10 and the large rRNA to form the base of the stalk. L10 forms an elongated spine to which L12 dimers bind in a sequential fashion forming a multimeric L10(L12)X complex. One or more lysine residues are methylated.

In terms of biological role, forms part of the ribosomal stalk which helps the ribosome interact with GTP-bound translation factors. The sequence is that of Large ribosomal subunit protein uL11 from Kineococcus radiotolerans (strain ATCC BAA-149 / DSM 14245 / SRS30216).